The following is a 350-amino-acid chain: Phenylalanine--tRNA ligase alpha subunit (350 aa).

Glu-257 contributes to the Mg(2+) binding site.

The protein belongs to the class-II aminoacyl-tRNA synthetase family. Phe-tRNA synthetase alpha subunit type 1 subfamily. In terms of assembly, tetramer of two alpha and two beta subunits. Mg(2+) serves as cofactor.

The protein resides in the cytoplasm. The catalysed reaction is tRNA(Phe) + L-phenylalanine + ATP = L-phenylalanyl-tRNA(Phe) + AMP + diphosphate + H(+). The polypeptide is Phenylalanine--tRNA ligase alpha subunit (Listeria monocytogenes serotype 4b (strain CLIP80459)).